A 473-amino-acid polypeptide reads, in one-letter code: Photosystem II CP43 reaction center protein (473 aa).

The propeptide occupies 1 to 14; that stretch reads MKILYSLRRFYHVE. T15 is modified (N-acetylthreonine). Phosphothreonine is present on T15. 5 helical membrane passes run 69-93, 134-155, 178-200, 255-275, and 291-312; these read LFEVAHFVPEKPMYEQGLILLPHLA, LLGPETLEESFPFFGYVWKDRN, KALYFGGIYDTWAPGGGDVRKIT, KPFAWARRAFVWSGEAYLSYS, and WFNNTAYPSEFYGPTGPEASQA. E367 is a binding site for [CaMn4O5] cluster. The helical transmembrane segment at 447-471 threads the bilayer; the sequence is RARAAAAGFEKGIDRDLEPVLYMTP.

The protein belongs to the PsbB/PsbC family. PsbC subfamily. PSII is composed of 1 copy each of membrane proteins PsbA, PsbB, PsbC, PsbD, PsbE, PsbF, PsbH, PsbI, PsbJ, PsbK, PsbL, PsbM, PsbT, PsbX, PsbY, PsbZ, Psb30/Ycf12, at least 3 peripheral proteins of the oxygen-evolving complex and a large number of cofactors. It forms dimeric complexes. Binds multiple chlorophylls and provides some of the ligands for the Ca-4Mn-5O cluster of the oxygen-evolving complex. It may also provide a ligand for a Cl- that is required for oxygen evolution. PSII binds additional chlorophylls, carotenoids and specific lipids. serves as cofactor.

It is found in the plastid. Its subcellular location is the chloroplast thylakoid membrane. In terms of biological role, one of the components of the core complex of photosystem II (PSII). It binds chlorophyll and helps catalyze the primary light-induced photochemical processes of PSII. PSII is a light-driven water:plastoquinone oxidoreductase, using light energy to abstract electrons from H(2)O, generating O(2) and a proton gradient subsequently used for ATP formation. This is Photosystem II CP43 reaction center protein from Oryza nivara (Indian wild rice).